Reading from the N-terminus, the 524-residue chain is Bifunctional purine biosynthesis protein PurH (524 aa).

The region spanning 1-145 (MIQQALLSVS…KNHRDVTVIV (145 aa)) is the MGS-like domain.

Belongs to the PurH family.

It carries out the reaction (6R)-10-formyltetrahydrofolate + 5-amino-1-(5-phospho-beta-D-ribosyl)imidazole-4-carboxamide = 5-formamido-1-(5-phospho-D-ribosyl)imidazole-4-carboxamide + (6S)-5,6,7,8-tetrahydrofolate. The catalysed reaction is IMP + H2O = 5-formamido-1-(5-phospho-D-ribosyl)imidazole-4-carboxamide. It participates in purine metabolism; IMP biosynthesis via de novo pathway; 5-formamido-1-(5-phospho-D-ribosyl)imidazole-4-carboxamide from 5-amino-1-(5-phospho-D-ribosyl)imidazole-4-carboxamide (10-formyl THF route): step 1/1. The protein operates within purine metabolism; IMP biosynthesis via de novo pathway; IMP from 5-formamido-1-(5-phospho-D-ribosyl)imidazole-4-carboxamide: step 1/1. The chain is Bifunctional purine biosynthesis protein PurH from Ralstonia nicotianae (strain ATCC BAA-1114 / GMI1000) (Ralstonia solanacearum).